The sequence spans 297 residues: Beta-glucoside kinase (297 aa).

5 to 11 (AFDIGGT) contacts ATP.

This sequence belongs to the ROK (NagC/XylR) family. In terms of assembly, homotetramer.

It catalyses the reaction D-cellobiose + ATP = 6-phospho-beta-D-glucosyl-(1-&gt;4)-D-glucose + ADP + H(+). Is inhibited by N-ethylmaleimide in vitro, but ATP affords considerable protection against the inhibitor. Its function is as follows. Catalyzes the ATP-dependent phosphorylation of a wide variety of beta-D-glucosides, to produce 6-phospho-beta-D-glucosides including cellobiose-6'-P, gentiobiose-6'-P, cellobiitol-6-P, salicin-6-P, and arbutin-6-P. Is not able to phosphorylate alpha-D-glucosides. May have a dual role of kinase and transcriptional regulator of the cellobiose-PTS operon. The protein is Beta-glucoside kinase (bglK) of Klebsiella pneumoniae.